Consider the following 177-residue polypeptide: Large ribosomal subunit protein uL6 (177 aa).

It belongs to the universal ribosomal protein uL6 family. In terms of assembly, part of the 50S ribosomal subunit.

In terms of biological role, this protein binds to the 23S rRNA, and is important in its secondary structure. It is located near the subunit interface in the base of the L7/L12 stalk, and near the tRNA binding site of the peptidyltransferase center. The chain is Large ribosomal subunit protein uL6 from Cupriavidus taiwanensis (strain DSM 17343 / BCRC 17206 / CCUG 44338 / CIP 107171 / LMG 19424 / R1) (Ralstonia taiwanensis (strain LMG 19424)).